Consider the following 526-residue polypeptide: GMP synthase [glutamine-hydrolyzing] (526 aa).

The Glutamine amidotransferase type-1 domain occupies 4–202 (KILILDFGSQ…VHDICGCDQS (199 aa)). C81 functions as the Nucleophile in the catalytic mechanism. Active-site residues include H176 and E178. The GMPS ATP-PPase domain maps to 203–395 (WNMPDYVETA…LGLPHDMVYR (193 aa)). 230–236 (SGGVDSS) serves as a coordination point for ATP.

As to quaternary structure, homodimer.

The catalysed reaction is XMP + L-glutamine + ATP + H2O = GMP + L-glutamate + AMP + diphosphate + 2 H(+). It functions in the pathway purine metabolism; GMP biosynthesis; GMP from XMP (L-Gln route): step 1/1. Its function is as follows. Catalyzes the synthesis of GMP from XMP. The sequence is that of GMP synthase [glutamine-hydrolyzing] from Methylobacillus flagellatus (strain ATCC 51484 / DSM 6875 / VKM B-1610 / KT).